We begin with the raw amino-acid sequence, 95 residues long: Aspartyl/glutamyl-tRNA(Asn/Gln) amidotransferase subunit C (95 aa).

Belongs to the GatC family. In terms of assembly, heterotrimer of A, B and C subunits.

The catalysed reaction is L-glutamyl-tRNA(Gln) + L-glutamine + ATP + H2O = L-glutaminyl-tRNA(Gln) + L-glutamate + ADP + phosphate + H(+). It catalyses the reaction L-aspartyl-tRNA(Asn) + L-glutamine + ATP + H2O = L-asparaginyl-tRNA(Asn) + L-glutamate + ADP + phosphate + 2 H(+). Allows the formation of correctly charged Asn-tRNA(Asn) or Gln-tRNA(Gln) through the transamidation of misacylated Asp-tRNA(Asn) or Glu-tRNA(Gln) in organisms which lack either or both of asparaginyl-tRNA or glutaminyl-tRNA synthetases. The reaction takes place in the presence of glutamine and ATP through an activated phospho-Asp-tRNA(Asn) or phospho-Glu-tRNA(Gln). This Pseudomonas putida (strain W619) protein is Aspartyl/glutamyl-tRNA(Asn/Gln) amidotransferase subunit C.